The sequence spans 167 residues: Zymogen granule membrane protein 16 (167 aa).

A signal peptide spans methionine 1 to alanine 16. The Jacalin-type lectin domain maps to serine 24–threonine 159.

It belongs to the jacalin lectin family.

Its subcellular location is the secreted. The protein resides in the extracellular space. The protein localises to the extracellular matrix. It localises to the zymogen granule lumen. It is found in the golgi apparatus lumen. Functionally, may play a role in protein trafficking. May act as a linker molecule between the submembranous matrix on the luminal side of zymogen granule membrane (ZGM) and aggregated secretory proteins during granule formation in the TGN. This Mus musculus (Mouse) protein is Zymogen granule membrane protein 16 (Zg16).